The sequence spans 211 residues: tRNA (guanine-N(7)-)-methyltransferase (211 aa).

Glutamate 44, aspartate 69, aspartate 96, and aspartate 118 together coordinate S-adenosyl-L-methionine. Residue aspartate 118 is part of the active site. Lysine 122 serves as a coordination point for substrate. Residues 124–129 (RHEKRR) form an interaction with RNA region. Residues aspartate 154 and 191–194 (TEYE) each bind substrate.

This sequence belongs to the class I-like SAM-binding methyltransferase superfamily. TrmB family.

It carries out the reaction guanosine(46) in tRNA + S-adenosyl-L-methionine = N(7)-methylguanosine(46) in tRNA + S-adenosyl-L-homocysteine. Its pathway is tRNA modification; N(7)-methylguanine-tRNA biosynthesis. In terms of biological role, catalyzes the formation of N(7)-methylguanine at position 46 (m7G46) in tRNA. The protein is tRNA (guanine-N(7)-)-methyltransferase of Streptococcus mutans serotype c (strain ATCC 700610 / UA159).